We begin with the raw amino-acid sequence, 283 residues long: Small ribosomal subunit protein uS3 (283 aa).

The KH type-2 domain maps to 39–107 (VRAYLKTKLK…PVHVNIEEIR (69 aa)). The tract at residues 219-283 (ASDDDKKRRG…AAVSAEKAGE (65 aa)) is disordered. The span at 221–236 (DDDKKRRGPRRDDGKP) shows a compositional bias: basic and acidic residues. Low complexity predominate over residues 237 to 260 (SGRPRAPRPEGQPGAAAPGSAPAA).

Belongs to the universal ribosomal protein uS3 family. In terms of assembly, part of the 30S ribosomal subunit. Forms a tight complex with proteins S10 and S14.

Binds the lower part of the 30S subunit head. Binds mRNA in the 70S ribosome, positioning it for translation. The protein is Small ribosomal subunit protein uS3 of Janthinobacterium sp. (strain Marseille) (Minibacterium massiliensis).